Consider the following 517-residue polypeptide: Serine hydroxymethyltransferase 2, mitochondrial (517 aa).

The N-terminal 29 residues, Met-1–Met-29, are a transit peptide targeting the mitochondrion. Ser-82 is an L-serine binding site. Residues Ser-82, Tyr-102, Glu-104, Tyr-112, Ser-148–Ser-150, and His-177 each bind pemetrexed. 2 residues coordinate L-serine: Glu-104 and Tyr-112. Glu-104 contacts methotrexate. Thr-184–Thr-186 lines the methotrexate pocket. Residues Ser-232 and His-260 each contribute to the pemetrexed site. 2 residues coordinate L-serine: His-260 and Lys-286. Lys-286 is modified (N6-(pyridoxal phosphate)lysine). Gly-331 contacts pemetrexed. Lys-414 is a binding site for methotrexate. L-serine is bound at residue Arg-430. Arg-430 is a pemetrexed binding site.

This sequence belongs to the SHMT family. As to quaternary structure, homotetramer. Requires pyridoxal 5'-phosphate as cofactor. In terms of tissue distribution, ubiquitous. Mainly expressed in the shoot apical meristem and roots. Also detected in the leaf vasculature, especially in the protoxylem and adjacent cell layers.

The protein resides in the mitochondrion. The enzyme catalyses (6R)-5,10-methylene-5,6,7,8-tetrahydrofolate + glycine + H2O = (6S)-5,6,7,8-tetrahydrofolate + L-serine. It participates in one-carbon metabolism; tetrahydrofolate interconversion. Its activity is regulated as follows. Inhibited by the antifolate drugs methotrexate and pemetrexed. Its function is as follows. Functions outside the photorespiratory pathway in catalyzing the interconversion of serine and glycine with the conversion of tetrahydrofolate (THF) into 5,10-methylene-THF. This Arabidopsis thaliana (Mouse-ear cress) protein is Serine hydroxymethyltransferase 2, mitochondrial.